The chain runs to 301 residues: Rhodopsin (301 aa).

The Extracellular portion of the chain corresponds to 1 to 18; sequence LHMIHLHWYQYPPMNPMM. The helical transmembrane segment at 19–43 threads the bilayer; it reads YPLLLIFMFITGIPCLAGNFVTIWV. The Cytoplasmic segment spans residues 44-55; the sequence is FMTTKSLRSPAN. The helical transmembrane segment at 56-78 threads the bilayer; that stretch reads LLVVNLAMSDFLMMFTMFPPMMI. At 79–92 the chain is on the extracellular side; it reads TCYYHTWTLGPTFC. The cysteines at positions 92 and 169 are disulfide-linked. The chain crosses the membrane as a helical span at residues 93 to 115; it reads QVYAFLGNLFGCTSIWTMVFITF. The 'Ionic lock' involved in activated form stabilization motif lies at 116–118; sequence DRY. Topologically, residues 116-134 are cytoplasmic; it reads DRYNVIVKGVAGEPLSNKK. A helical transmembrane segment spans residues 135 to 155; sequence AALWILSAWVLSFSWCSAPFF. At 156–182 the chain is on the extracellular side; it reads GWNRYVPEGNLTGCGTDYLSEDALSRS. The N-linked (GlcNAc...) asparagine glycan is linked to Asn165. A helical membrane pass occupies residues 183–204; that stretch reads YLYVYSVWVYFLPLLITIYCYV. Residues 205-245 lie on the Cytoplasmic side of the membrane; that stretch reads FIIKAVAAHEKGMRDQAKKMGIKSLRNEEAQKTSAECRLAK. A helical membrane pass occupies residues 246–267; that stretch reads IAMTTVALWFIAWTPYLLINWV. At 268-278 the chain is on the extracellular side; sequence GMFARSYLSPV. A helical membrane pass occupies residues 279–300; sequence YTIWGYVFAKANAVYNPIVYAI. Lys288 is modified (N6-(retinylidene)lysine).

The protein belongs to the G-protein coupled receptor 1 family. Opsin subfamily. Homodimer. Interacts with GNAQ. Contains one covalently linked retinal chromophore.

The protein resides in the cell projection. It localises to the rhabdomere membrane. Functionally, photoreceptor required for image-forming vision at low light intensity. Can use both retinal and 3-dehydroretinal as visual pigment. Light-induced isomerization of 11-cis to all-trans retinal triggers a conformational change that activates signaling via G-proteins. Signaling via GNAQ probably mediates the activation of phospholipase C. The protein is Rhodopsin (RHO) of Cambarellus shufeldtii (Cajun dwarf crayfish).